The following is a 253-amino-acid chain: Small ribosomal subunit protein uS5 (253 aa).

The segment at 1–30 (MAESAPRGFGRGGRGGRGRGRGRRGAKRDE) is disordered. The segment covering 14–26 (RGGRGRGRGRRGA) has biased composition (basic residues). Residues 75-138 (LNDEVMKVVP…IMGKLSIMPI (64 aa)) enclose the S5 DRBM domain.

This sequence belongs to the universal ribosomal protein uS5 family. Component of the small ribosomal subunit (SSU). Mature yeast ribosomes consist of a small (40S) and a large (60S) subunit. The 40S small subunit contains 1 molecule of ribosomal RNA (18S rRNA) and at least 33 different proteins. The large 60S subunit contains 3 rRNA molecules (25S, 5.8S and 5S rRNA) and at least 46 different proteins. Interacts with snoRNA U3. Interacts with MPP10. Component of the ribosomal small subunit (SSU) processome composed of at least 40 protein subunits and snoRNA U3.

The protein resides in the cytoplasm. Component of the ribosome, a large ribonucleoprotein complex responsible for the synthesis of proteins in the cell. The small ribosomal subunit (SSU) binds messenger RNAs (mRNAs) and translates the encoded message by selecting cognate aminoacyl-transfer RNA (tRNA) molecules. The large subunit (LSU) contains the ribosomal catalytic site termed the peptidyl transferase center (PTC), which catalyzes the formation of peptide bonds, thereby polymerizing the amino acids delivered by tRNAs into a polypeptide chain. The nascent polypeptides leave the ribosome through a tunnel in the LSU and interact with protein factors that function in enzymatic processing, targeting, and the membrane insertion of nascent chains at the exit of the ribosomal tunnel. Plays a role in the assembly and function of the 40S ribosomal subunit. Mutations in this protein affects the control of translational fidelity. Involved in nucleolar processing of pre-18S ribosomal RNA and ribosome assembly. Functionally, component of the ribosome, a large ribonucleoprotein complex responsible for the synthesis of proteins in the cell. The small ribosomal subunit (SSU) binds messenger RNAs (mRNAs) and translates the encoded message by selecting cognate aminoacyl-transfer RNA (tRNA) molecules. The large subunit (LSU) contains the ribosomal catalytic site termed the peptidyl transferase center (PTC), which catalyzes the formation of peptide bonds, thereby polymerizing the amino acids delivered by tRNAs into a polypeptide chain. The nascent polypeptides leave the ribosome through a tunnel in the LSU and interact with protein factors that function in enzymatic processing, targeting, and the membrane insertion of nascent chains at the exit of the ribosomal tunnel. uS5 is important for the assembly and function of the 40S ribosomal subunit. Mutations in this protein affects the control of translational fidelity. Involved in nucleolar processing of pre-18S ribosomal RNA and ribosome assembly. The sequence is that of Small ribosomal subunit protein uS5 (rps2) from Schizosaccharomyces pombe (strain 972 / ATCC 24843) (Fission yeast).